We begin with the raw amino-acid sequence, 560 residues long: MSTHNEYDYIIIGAGSAGNVLATRLTEDADVSVLLLEAGGPDYRLDFRTQMPAALAFPLQGKRYNWAYKTDPEPFMNNRRMDCGRGKGLGGSSLINGMCYIRGNAMDYDNWASMPGLEDWTYLDCLPYFRKAETRDIGPNDYHGGDGPLRVTTPKAGNNELFAAMVEAGVQAGYPRTDDLNGYQQEGFGPMDRTVTPKGRRSSTARGYLDLAKPRPNLTIVTHALTDRILFSGKRAVGVQWLRNDQPQRATARREVLLCGGAIASPQILQRSGVGPADLLRSLDIDLVHHLPGVGANLQDHLEMYLQYECKKPVSLAPALKLYNQPAIGAEWLFLGTGIGASNQFEAGGFIRSDAEFDWPNLQYHFLPVAINYNGSNPIKAHSFQMHVGSMRSPSRGRIHVRSKDPREHPSILFNYMSHEQDWREFRAAIRITREIFAQPALAPYSGREISPGSALQTDAQIDAFVREHAETAYHPSCSNKMGHADDPMAVVDGQGRVHGLEGLRIVDASIMPQVVTGNLNAPTIMMAEKLADVIRGRTPLARSTAPYYKANGAPVRKQD.

8-37 (DYIIIGAGSAGNVLATRLTEDADVSVLLLE) is an FAD binding site. His-475 acts as the Proton acceptor in catalysis.

The protein belongs to the GMC oxidoreductase family. Requires FAD as cofactor.

It catalyses the reaction choline + A = betaine aldehyde + AH2. The catalysed reaction is betaine aldehyde + NAD(+) + H2O = glycine betaine + NADH + 2 H(+). It participates in amine and polyamine biosynthesis; betaine biosynthesis via choline pathway; betaine aldehyde from choline (cytochrome c reductase route): step 1/1. Its function is as follows. Involved in the biosynthesis of the osmoprotectant glycine betaine. Catalyzes the oxidation of choline to betaine aldehyde and betaine aldehyde to glycine betaine at the same rate. The sequence is that of Oxygen-dependent choline dehydrogenase from Stenotrophomonas maltophilia (strain K279a).